Here is a 410-residue protein sequence, read N- to C-terminus: LL-diaminopimelate aminotransferase (410 aa).

Substrate is bound by residues tyrosine 15 and glycine 42. Pyridoxal 5'-phosphate-binding positions include tyrosine 72, 108-109 (AK), tyrosine 132, asparagine 187, tyrosine 218, and 246-248 (SFS). Positions 109, 132, and 187 each coordinate substrate. Residue lysine 249 is modified to N6-(pyridoxal phosphate)lysine. Pyridoxal 5'-phosphate contacts are provided by arginine 257 and asparagine 292. Residues asparagine 292 and arginine 388 each contribute to the substrate site.

The protein belongs to the class-I pyridoxal-phosphate-dependent aminotransferase family. LL-diaminopimelate aminotransferase subfamily. Homodimer. Pyridoxal 5'-phosphate serves as cofactor.

The catalysed reaction is (2S,6S)-2,6-diaminopimelate + 2-oxoglutarate = (S)-2,3,4,5-tetrahydrodipicolinate + L-glutamate + H2O + H(+). Its pathway is amino-acid biosynthesis; L-lysine biosynthesis via DAP pathway; LL-2,6-diaminopimelate from (S)-tetrahydrodipicolinate (aminotransferase route): step 1/1. In terms of biological role, involved in the synthesis of meso-diaminopimelate (m-DAP or DL-DAP), required for both lysine and peptidoglycan biosynthesis. Catalyzes the direct conversion of tetrahydrodipicolinate to LL-diaminopimelate. Is also able to catalyze the reverse reaction in vitro, i.e. the transamination of LL-diaminopimelate with 2-oxoglutarate to produce 2-oxo-6-aminopimelate (in equilibrium with tetrahydrodipicolinate) and glutamate. Has maximal aminotransferase activity using 2-oxoglutarate as an amino group acceptor, and cannot use oxaloacetate instead of 2-oxoglutarate, although 2-oxoadipate can substitute with 21% relative activity. Cannot use m-DAP, lysine or ornithine as the amino-group donor, when using 2-oxoglutarate as the amino-group acceptor. This is LL-diaminopimelate aminotransferase from Methanothermobacter thermautotrophicus (strain ATCC 29096 / DSM 1053 / JCM 10044 / NBRC 100330 / Delta H) (Methanobacterium thermoautotrophicum).